Consider the following 529-residue polypeptide: Bifunctional purine biosynthesis protein PurH (529 aa).

Positions M1–V148 constitute an MGS-like domain.

Belongs to the PurH family.

It carries out the reaction (6R)-10-formyltetrahydrofolate + 5-amino-1-(5-phospho-beta-D-ribosyl)imidazole-4-carboxamide = 5-formamido-1-(5-phospho-D-ribosyl)imidazole-4-carboxamide + (6S)-5,6,7,8-tetrahydrofolate. It catalyses the reaction IMP + H2O = 5-formamido-1-(5-phospho-D-ribosyl)imidazole-4-carboxamide. The protein operates within purine metabolism; IMP biosynthesis via de novo pathway; 5-formamido-1-(5-phospho-D-ribosyl)imidazole-4-carboxamide from 5-amino-1-(5-phospho-D-ribosyl)imidazole-4-carboxamide (10-formyl THF route): step 1/1. It functions in the pathway purine metabolism; IMP biosynthesis via de novo pathway; IMP from 5-formamido-1-(5-phospho-D-ribosyl)imidazole-4-carboxamide: step 1/1. The protein is Bifunctional purine biosynthesis protein PurH of Cronobacter sakazakii (strain ATCC BAA-894) (Enterobacter sakazakii).